The sequence spans 385 residues: Prostacyclin receptor (385 aa).

Over 1 to 16 (MADSCRNLTYVRDSVG) the chain is Extracellular. 2 disulfides stabilise this stretch: cysteine 5–cysteine 165 and cysteine 92–cysteine 170. N-linked (GlcNAc...) asparagine glycosylation is present at asparagine 7. A helical transmembrane segment spans residues 17 to 38 (PATSTLMFVAGVVGNGLALGIL). The Cytoplasmic segment spans residues 39-51 (GARRHSRPSAFAV). Residues 52 to 76 (LVTGLGVTDLLGTCFLSPAVFAAYA) form a helical membrane-spanning segment. At 77–94 (RNSSLLGLARGRPALCDA) the chain is on the extracellular side. A helical membrane pass occupies residues 95–115 (FAFAMTFFGLASTLILFAMAV). Over 116–134 (ERCLALSHPYLYAQLDGPR) the chain is Cytoplasmic. A helical transmembrane segment spans residues 135 to 158 (RARLALPAIYAFCTIFCSLPFLGL). The Extracellular segment spans residues 159–181 (GQHQQYCPGSWCFIRMRSAEPGG). The helical transmembrane segment at 182-208 (CAFLLAYASLVALLVAAIVLCNGSVTL) threads the bilayer. Residues 209-234 (SLCRMYRQQRRHQARCPRPRAGEDEV) are Cytoplasmic-facing. The helical transmembrane segment at 235–259 (DHLILLALMTGIMAVCSLPLTPQIR) threads the bilayer. The Extracellular portion of the chain corresponds to 260-273 (GFTQAIAPDSSEMG). The helical transmembrane segment at 274–294 (DLLAFRFNAFNPILDPWVFIL) threads the bilayer. Topologically, residues 295-385 (FRKSVFQRLK…AGSEAACSLC (91 aa)) are cytoplasmic. The tract at residues 315–344 (AQGDSRTSLSQSASGRKDSSAPPALEGKKG) is disordered. A compositionally biased stretch (polar residues) spans 318 to 328 (DSRTSLSQSAS). Cysteine 382 is subject to Cysteine methyl ester. A lipid anchor (S-farnesyl cysteine) is attached at cysteine 382. Positions 383-385 (SLC) are cleaved as a propeptide — removed in mature form.

This sequence belongs to the G-protein coupled receptor 1 family. As to quaternary structure, interacts (non-isoprenylated C-terminus) with PDZK1. Isoprenylation does not influence ligand binding but is required for efficient coupling to the effectors adenylyl cyclase and phospholipase C.

It is found in the cell membrane. Its function is as follows. Receptor for prostacyclin (prostaglandin I2 or PGI2). The activity of this receptor is mediated by G(s) proteins which activate adenylate cyclase. In Bos taurus (Bovine), this protein is Prostacyclin receptor (PTGIR).